Here is a 970-residue protein sequence, read N- to C-terminus: MQGWHTTFLGMRGLPRDISDFEMKAFFTFDGAERDAINARRGDSHKLGLALHIGFLRMSGRLLGAFRVIPVALWRHLGNELGIAAPEVASLRAMYERGRTLFDHQQVACTVLGFQWMSEHQRRSLVRELRDEVAGCDRDQLLVRARQWLYKNKLVIVHERAIRTLIAAALAQLEVETGTAIAASVDPATLDRWRASVSELRPDGQTQQSWLWAAPAKHSTRQISEVLERIDLLYTLDVHKHLADIPDLILRRYARRLVSRPPSAGAKIKEPARTVEVACFLRYCLFTTTDQLILMVQRRIADLWRQAAADVPATVNWAAMYKTLLGELVALSAQGAVPDAELRARLEALITETQKRKPPSRASLVREGLIDGIRPVRSLLVAIAKLPWQATGEHPAIEYLAKLQALYLKGSRKLPVEVVAPSLGMIWQVSISSPDRERAFQALEVATLFALRRAVRNGSVWIEHSLSFRGRARLFFTDERWQAESKKHYARLSLPSKAATFLKPLLARVTAGVDAVAAAARSGVLRVDDELHLSPLPAEDEDPEVTKLRAALDHRIGEVQLPEVILAVDAQVRFSWIMLGREPRSTDELLMVYAGIMAHGTSLTAVECARMIPQLSATSIRQAMRWARDERRLSQACQAVLEFMQRHPIAATWGRSDLASSDMMSMETTKRVWQARLDPRRNTPSIGIYSHVKDRWGIFHAQPFVLNERQAGVAIEGVIRQEKLETSQLAVDTHGYTDFAMSHARLLGFDLCPRLKELKQRHLFVPRGTKVPAEIAAVCEANVDVALIEKHWDSLVHLAASVMSGHASAVAALARFGSAAQGDPIYEAGVQLGRLLRTAFLADYFVKDAFRNELRRVLNRGEAVNALKRAIYTGRISPAQAKRVDEMQAVADALSLMANIVMAWNTSQMQAVLDRWSNRRQVIPPELIGKIAPTRLESINLRGVFRFPVDRYADQILPSRPNASITGTNG.

Belongs to the transposase 7 family.

Its function is as follows. Required for transposition of transposon Tn5271. This chain is Transposase for insertion sequence element IS1071 in transposon Tn5271, found in Comamonas testosteroni (Pseudomonas testosteroni).